A 133-amino-acid polypeptide reads, in one-letter code: uncharacterized protein (133 aa).

In terms of domain architecture, HIT spans 3–106 (IFTKIINREL…PTRSLSDFGF (104 aa)). Residues 90–94 (HLHIH) carry the Histidine triad motif motif.

This is an uncharacterized protein from Mycobacterium tuberculosis (strain ATCC 25618 / H37Rv).